The primary structure comprises 583 residues: Putative ABC transporter ATP-binding protein exp8 (583 aa).

Residues 25–308 (TFLALSFLLA…VTQNFSTLQT (284 aa)) form the ABC transmembrane type-1 domain. Helical transmembrane passes span 26–46 (FLAL…PLVA), 61–81 (AVTV…VQYV), 135–155 (MFSG…TTLY), 159–179 (VLDF…FLLV), and 259–279 (LGYA…GITV). Positions 341–574 (IRFEHVCFSY…GGTYHKMYSL (234 aa)) constitute an ABC transporter domain. ATP is bound at residue 374–381 (GHTGSGKS).

Belongs to the ABC transporter superfamily.

It is found in the cell membrane. This Streptococcus pneumoniae serotype 4 (strain ATCC BAA-334 / TIGR4) protein is Putative ABC transporter ATP-binding protein exp8 (exp8).